A 352-amino-acid chain; its full sequence is Biotin synthase (352 aa).

In terms of domain architecture, Radical SAM core spans 44 to 262 (NRVQVSTLLS…LAVARILMPK (219 aa)). [4Fe-4S] cluster is bound by residues C59, C63, and C66. The [2Fe-2S] cluster site is built by C103, C134, C194, and R266.

Belongs to the radical SAM superfamily. Biotin synthase family. Homodimer. [4Fe-4S] cluster is required as a cofactor. The cofactor is [2Fe-2S] cluster.

It catalyses the reaction (4R,5S)-dethiobiotin + (sulfur carrier)-SH + 2 reduced [2Fe-2S]-[ferredoxin] + 2 S-adenosyl-L-methionine = (sulfur carrier)-H + biotin + 2 5'-deoxyadenosine + 2 L-methionine + 2 oxidized [2Fe-2S]-[ferredoxin]. Its pathway is cofactor biosynthesis; biotin biosynthesis; biotin from 7,8-diaminononanoate: step 2/2. Catalyzes the conversion of dethiobiotin (DTB) to biotin by the insertion of a sulfur atom into dethiobiotin via a radical-based mechanism. The protein is Biotin synthase of Pseudomonas entomophila (strain L48).